The chain runs to 64 residues: Large ribosomal subunit protein bL35 (64 aa).

The segment at 1–41 is disordered; that stretch reads MPKMKSHSGASKRFKVSGKGKLLRQQANRRHLLEHKPSRRT.

This sequence belongs to the bacterial ribosomal protein bL35 family.

The sequence is that of Large ribosomal subunit protein bL35 from Nocardia farcinica (strain IFM 10152).